Consider the following 206-residue polypeptide: IMPACT family member HI_0722 (206 aa).

It belongs to the IMPACT family.

The chain is IMPACT family member HI_0722 from Haemophilus influenzae (strain ATCC 51907 / DSM 11121 / KW20 / Rd).